A 308-amino-acid chain; its full sequence is Ribosomal RNA small subunit methyltransferase H (308 aa).

S-adenosyl-L-methionine contacts are provided by residues Gly-36 to His-38, Asp-55, Phe-86, Asp-103, and Gln-110.

This sequence belongs to the methyltransferase superfamily. RsmH family.

Its subcellular location is the cytoplasm. The enzyme catalyses cytidine(1402) in 16S rRNA + S-adenosyl-L-methionine = N(4)-methylcytidine(1402) in 16S rRNA + S-adenosyl-L-homocysteine + H(+). In terms of biological role, specifically methylates the N4 position of cytidine in position 1402 (C1402) of 16S rRNA. This chain is Ribosomal RNA small subunit methyltransferase H, found in Helicobacter pylori (strain Shi470).